A 556-amino-acid polypeptide reads, in one-letter code: Formate--tetrahydrofolate ligase (556 aa).

65–72 (TPAGEGKT) contributes to the ATP binding site.

The protein belongs to the formate--tetrahydrofolate ligase family.

The enzyme catalyses (6S)-5,6,7,8-tetrahydrofolate + formate + ATP = (6R)-10-formyltetrahydrofolate + ADP + phosphate. It participates in one-carbon metabolism; tetrahydrofolate interconversion. The chain is Formate--tetrahydrofolate ligase from Lachnoclostridium phytofermentans (strain ATCC 700394 / DSM 18823 / ISDg) (Clostridium phytofermentans).